The following is a 366-amino-acid chain: tRNA 2-selenouridine synthase (366 aa).

The Rhodanese domain occupies 12-135; the sequence is FLNDVPMMDA…MRTFLLDTLH (124 aa). Catalysis depends on C95, which acts as the S-selanylcysteine intermediate.

This sequence belongs to the SelU family. In terms of assembly, monomer.

The enzyme catalyses 5-methylaminomethyl-2-thiouridine(34) in tRNA + selenophosphate + (2E)-geranyl diphosphate + H2O + H(+) = 5-methylaminomethyl-2-selenouridine(34) in tRNA + (2E)-thiogeraniol + phosphate + diphosphate. The catalysed reaction is 5-methylaminomethyl-2-thiouridine(34) in tRNA + (2E)-geranyl diphosphate = 5-methylaminomethyl-S-(2E)-geranyl-thiouridine(34) in tRNA + diphosphate. It carries out the reaction 5-methylaminomethyl-S-(2E)-geranyl-thiouridine(34) in tRNA + selenophosphate + H(+) = 5-methylaminomethyl-2-(Se-phospho)selenouridine(34) in tRNA + (2E)-thiogeraniol. It catalyses the reaction 5-methylaminomethyl-2-(Se-phospho)selenouridine(34) in tRNA + H2O = 5-methylaminomethyl-2-selenouridine(34) in tRNA + phosphate. Functionally, involved in the post-transcriptional modification of the uridine at the wobble position (U34) of tRNA(Lys), tRNA(Glu) and tRNA(Gln). Catalyzes the conversion of 2-thiouridine (S2U-RNA) to 2-selenouridine (Se2U-RNA). Acts in a two-step process involving geranylation of 2-thiouridine (S2U) to S-geranyl-2-thiouridine (geS2U) and subsequent selenation of the latter derivative to 2-selenouridine (Se2U) in the tRNA chain. The sequence is that of tRNA 2-selenouridine synthase from Pseudomonas savastanoi pv. phaseolicola (strain 1448A / Race 6) (Pseudomonas syringae pv. phaseolicola (strain 1448A / Race 6)).